We begin with the raw amino-acid sequence, 62 residues long: Alpha-conotoxin-like Bn1.3 (62 aa).

A signal peptide spans 1–18 (MGMRMMFTVFLLVVLATA). A propeptide spanning residues 19–48 (VLPVTLDRASDGRNAAANAKTPRLIAPFIR) is cleaved from the precursor. Intrachain disulfides connect Cys51–Cys57 and Cys52–Cys61. Cys61 is modified (cysteine amide).

Belongs to the conotoxin A superfamily. As to expression, expressed by the venom duct.

It localises to the secreted. Its function is as follows. Does not show activity on the acetylcholine receptors tested. The protein is Alpha-conotoxin-like Bn1.3 of Conus bandanus (Banded marble cone).